A 138-amino-acid polypeptide reads, in one-letter code: Putative pre-16S rRNA nuclease (138 aa).

Belongs to the YqgF nuclease family.

It localises to the cytoplasm. In terms of biological role, could be a nuclease involved in processing of the 5'-end of pre-16S rRNA. This chain is Putative pre-16S rRNA nuclease, found in Citrobacter koseri (strain ATCC BAA-895 / CDC 4225-83 / SGSC4696).